Here is a 459-residue protein sequence, read N- to C-terminus: Pentatricopeptide repeat-containing protein At5g18390, mitochondrial (459 aa).

A mitochondrion-targeting transit peptide spans 1 to 7 (MLLLRRY). 9 PPR repeats span residues 110–144 (TSMEYEELAKSLASHKKYESMWKILKQMKDLSLDI), 145–175 (SGETLCFIIEQYGKNGHVDQAVELFNGVPKT), 181–215 (TVDVYNSLLHALCDVKMFHGAYALIRRMIRKGLKP), 216–250 (DKRTYAILVNGWCSAGKMKEAQEFLDEMSRRGFNP), 251–285 (PARGRDLLIEGLLNAGYLESAKEMVSKMTKGGFVP), 286–320 (DIQTFNILIEAISKSGEVEFCIEMYYTACKLGLCV), 321–355 (DIDTYKTLIPAVSKIGKIDEAFRLLNNCVEDGHKP), 356–390 (FPSLYAPIIKGMCRNGMFDDAFSFFSDMKVKAHPP), and 391–425 (NRPVYTMLITMCGRGGKFVDAANYLVEMTEMGLVP).

The protein belongs to the PPR family. P subfamily.

It is found in the mitochondrion. The chain is Pentatricopeptide repeat-containing protein At5g18390, mitochondrial from Arabidopsis thaliana (Mouse-ear cress).